The primary structure comprises 320 residues: MATTVAATKLTSLKAVKKLGFREIRQVRQWSPLQSAMPHFGMLRCGSRQSFATSTVVKAQATAVEQSTGEAVPKVESPVVVVTGASRGIGKAIALSLGKAGCKVLVNYARSAKEAEEVSKQIEAYGGQAITFGGDVSKEADVEAMMKTAIDAWGTIDVVVNNAGITRDTLLIRMKKSQWDEVIDLNLTGVFLCTQAATKIMMKKRKGRIINIASVVGLIGNIGQANYAAAKAGVIGFSKTAAREGASRNINVNVVCPGFIASDMTAKLGEDMEKKILGTIPLGRYGQPEDVAGLVEFLALSPAASYITGQAFTIDGGIAI.

Residues 1 to 60 (MATTVAATKLTSLKAVKKLGFREIRQVRQWSPLQSAMPHFGMLRCGSRQSFATSTVVKAQ) constitute a chloroplast transit peptide. An NADP(+)-binding site is contributed by 82-106 (VTGASRGIGKAIALSLGKAGCKVLV). Residue S214 coordinates substrate. Catalysis depends on Y227, which acts as the Proton acceptor.

The protein belongs to the short-chain dehydrogenases/reductases (SDR) family. As to quaternary structure, homotetramer.

Its subcellular location is the plastid. It is found in the chloroplast. The enzyme catalyses a (3R)-hydroxyacyl-[ACP] + NADP(+) = a 3-oxoacyl-[ACP] + NADPH + H(+). The protein operates within lipid metabolism; fatty acid biosynthesis. This is 3-oxoacyl-[acyl-carrier-protein] reductase 1, chloroplastic (gbkr1) from Brassica napus (Rape).